A 421-amino-acid chain; its full sequence is UDP-N-acetylglucosamine 1-carboxyvinyltransferase (421 aa).

Residue 22-23 (KN) coordinates phosphoenolpyruvate. UDP-N-acetyl-alpha-D-glucosamine is bound at residue arginine 92. Catalysis depends on cysteine 116, which acts as the Proton donor. Residue cysteine 116 is modified to 2-(S-cysteinyl)pyruvic acid O-phosphothioketal. UDP-N-acetyl-alpha-D-glucosamine-binding positions include 121–125 (RPVDQ), aspartate 308, and isoleucine 330.

This sequence belongs to the EPSP synthase family. MurA subfamily.

Its subcellular location is the cytoplasm. It carries out the reaction phosphoenolpyruvate + UDP-N-acetyl-alpha-D-glucosamine = UDP-N-acetyl-3-O-(1-carboxyvinyl)-alpha-D-glucosamine + phosphate. It participates in cell wall biogenesis; peptidoglycan biosynthesis. Its function is as follows. Cell wall formation. Adds enolpyruvyl to UDP-N-acetylglucosamine. In Ralstonia nicotianae (strain ATCC BAA-1114 / GMI1000) (Ralstonia solanacearum), this protein is UDP-N-acetylglucosamine 1-carboxyvinyltransferase.